A 148-amino-acid polypeptide reads, in one-letter code: UPF0260 protein ESA_01462 (148 aa).

Belongs to the UPF0260 family.

This chain is UPF0260 protein ESA_01462, found in Cronobacter sakazakii (strain ATCC BAA-894) (Enterobacter sakazakii).